A 347-amino-acid chain; its full sequence is UDP-3-O-acylglucosamine N-acyltransferase 1 (347 aa).

The Proton acceptor role is filled by His246.

It belongs to the transferase hexapeptide repeat family. LpxD subfamily. Homotrimer.

It carries out the reaction a UDP-3-O-[(3R)-3-hydroxyacyl]-alpha-D-glucosamine + a (3R)-hydroxyacyl-[ACP] = a UDP-2-N,3-O-bis[(3R)-3-hydroxyacyl]-alpha-D-glucosamine + holo-[ACP] + H(+). Its pathway is bacterial outer membrane biogenesis; LPS lipid A biosynthesis. Functionally, catalyzes the N-acylation of UDP-3-O-acylglucosamine using 3-hydroxyacyl-ACP as the acyl donor. Is involved in the biosynthesis of lipid A, a phosphorylated glycolipid that anchors the lipopolysaccharide to the outer membrane of the cell. The protein is UDP-3-O-acylglucosamine N-acyltransferase 1 of Francisella tularensis subsp. holarctica (strain LVS).